The sequence spans 257 residues: Discoidin-2 (257 aa).

The tract at residues 1 to 155 (MSVPAGSVSC…SLRWELYALP (155 aa)) is beta-sandwich. Positions 10 to 154 (CLANALLNLR…ISLRWELYAL (145 aa)) constitute an F5/8 type C domain. N39, S40, and D47 together coordinate Ca(2+). The Cell attachment site motif lies at 81–83 (RGD). H84 carries the post-translational modification Phosphohistidine. The interval 156–162 (VKSYSNP) is linker. The tract at residues 163 to 257 (SVQVGEVSIG…FDYVAVEFNN (95 aa)) is lectin-like. 3 residues coordinate a carbohydrate: D209, R218, and W238.

Homotrimer. Post-translationally, the N-terminus is blocked. In terms of tissue distribution, maturing spore cells.

Its function is as follows. Galactose-binding lectin. May be necessary for the primary process of spore formation and may be involved in spore coat formation. The sequence is that of Discoidin-2 (dscE) from Dictyostelium discoideum (Social amoeba).